A 121-amino-acid polypeptide reads, in one-letter code: Prefoldin subunit beta (121 aa).

This sequence belongs to the prefoldin subunit beta family. In terms of assembly, heterohexamer of two alpha and four beta subunits.

The protein resides in the cytoplasm. Molecular chaperone capable of stabilizing a range of proteins. Seems to fulfill an ATP-independent, HSP70-like function in archaeal de novo protein folding. The sequence is that of Prefoldin subunit beta from Methanosphaerula palustris (strain ATCC BAA-1556 / DSM 19958 / E1-9c).